Consider the following 548-residue polypeptide: Membrane protein insertase YidC (548 aa).

The helical transmembrane segment at 6 to 26 threads the bilayer; sequence NLLVIALLFVSFMIWQAWEQD. Residues 28–56 are disordered; it reads NPQPQTQQTTQTTTTAAGSAADQGVPASG. A compositionally biased stretch (low complexity) spans 29–42; that stretch reads PQPQTQQTTQTTTT. The next 4 helical transmembrane spans lie at 350-370, 424-444, 458-478, and 499-519; these read FVGNWGFSIIIITFIVRGIMY, FPLIIQMPIFLALYYMLMGSI, LSAQDPYYILPILMGVTMFFI, and PVIFTVFFLWFPSGLVLYYIV.

It belongs to the OXA1/ALB3/YidC family. Type 1 subfamily. As to quaternary structure, interacts with the Sec translocase complex via SecD. Specifically interacts with transmembrane segments of nascent integral membrane proteins during membrane integration.

It is found in the cell inner membrane. Required for the insertion and/or proper folding and/or complex formation of integral membrane proteins into the membrane. Involved in integration of membrane proteins that insert both dependently and independently of the Sec translocase complex, as well as at least some lipoproteins. Aids folding of multispanning membrane proteins. The protein is Membrane protein insertase YidC of Salmonella paratyphi C (strain RKS4594).